Consider the following 179-residue polypeptide: Transcription factor BOA15 (179 aa).

Its subcellular location is the nucleus. Transcription factor that probably coregulates the gene clusters that mediates the biosynthesis of botcinin acid and its botcinin derivatives, acetate-derived polyketides that contribute to virulence when combined with the sesquiterpene botrydial. Botcinin acid and its derivatives have been shown to induce chlorosis and necrosis during host plant infection, but also have antifungal activities. The chain is Transcription factor BOA15 from Botryotinia fuckeliana (strain B05.10) (Noble rot fungus).